The following is a 313-amino-acid chain: 3'-5' exoribonuclease YhaM (313 aa).

An HD domain is found at 163–279 (HVVSMLRLAK…LHQIDLMDAS (117 aa)).

It belongs to the YhaM family.

Shows a 3'-5' exoribonuclease activity. The chain is 3'-5' exoribonuclease YhaM from Listeria welshimeri serovar 6b (strain ATCC 35897 / DSM 20650 / CCUG 15529 / CIP 8149 / NCTC 11857 / SLCC 5334 / V8).